A 109-amino-acid chain; its full sequence is Ferredoxin (109 aa).

2 consecutive 4Fe-4S ferredoxin-type domains span residues 2-30 and 31-60; these read TYVV…YEGE and FMLV…PESP. Residues Cys9 and Cys17 each coordinate [3Fe-4S] cluster. [4Fe-4S] cluster is bound by residues Cys21, Cys40, Cys43, and Cys46. Position 50 (Cys50) interacts with [3Fe-4S] cluster.

The cofactor is [4Fe-4S] cluster. [3Fe-4S] cluster is required as a cofactor.

Its function is as follows. Ferredoxins are iron-sulfur proteins that transfer electrons in a wide variety of metabolic reactions. The protein is Ferredoxin (fdxA) of Rickettsia felis (strain ATCC VR-1525 / URRWXCal2) (Rickettsia azadi).